The chain runs to 254 residues: Trypsin 3A1 (254 aa).

An N-terminal signal peptide occupies residues 1 to 20 (MNQFLFVSFCALLGLSQVSA). The propeptide at 21-27 (ATLSSGR) is activation peptide. The Peptidase S1 domain occupies 28 to 253 (IVGGFQIDIA…VRQWIREVSE (226 aa)). Residues Cys53 and Cys69 are joined by a disulfide bond. Active-site charge relay system residues include His68 and Asp113. 2 cysteine pairs are disulfide-bonded: Cys178-Cys194 and Cys205-Cys229. Catalysis depends on Ser209, which acts as the Charge relay system.

The protein belongs to the peptidase S1 family. In terms of tissue distribution, midgut.

The protein resides in the secreted. The protein localises to the extracellular space. The catalysed reaction is Preferential cleavage: Arg-|-Xaa, Lys-|-Xaa.. In terms of biological role, major function may be to aid in digestion of the blood meal. The chain is Trypsin 3A1 from Aedes aegypti (Yellowfever mosquito).